Reading from the N-terminus, the 218-residue chain is N-(5'-phosphoribosyl)anthranilate isomerase (218 aa).

The protein belongs to the TrpF family.

It catalyses the reaction N-(5-phospho-beta-D-ribosyl)anthranilate = 1-(2-carboxyphenylamino)-1-deoxy-D-ribulose 5-phosphate. The protein operates within amino-acid biosynthesis; L-tryptophan biosynthesis; L-tryptophan from chorismate: step 3/5. The polypeptide is N-(5'-phosphoribosyl)anthranilate isomerase (Bordetella bronchiseptica (strain ATCC BAA-588 / NCTC 13252 / RB50) (Alcaligenes bronchisepticus)).